Here is a 250-residue protein sequence, read N- to C-terminus: Cytochrome c oxidase subunit 2 (250 aa).

The Mitochondrial intermembrane segment spans residues 1–39 (MFFLINKLVMNFDAPSPWGIYFQDSATPQMEGLNELHDN). The chain crosses the membrane as a helical span at residues 40–60 (IMYYLVVILFAVGWILLSIVI). Topologically, residues 61–81 (NYVSTKSPISHKYLNHGTLIE) are mitochondrial matrix. The chain crosses the membrane as a helical span at residues 82–104 (LIWTITPAVILILIAFPSFKLLY). Residues 105-250 (LMDEVSDPSM…EKFLIWLKEQ (146 aa)) lie on the Mitochondrial intermembrane side of the membrane. Cu cation is bound by residues histidine 185, cysteine 220, glutamate 222, cysteine 224, histidine 228, and methionine 231. Residue glutamate 222 participates in Mg(2+) binding.

It belongs to the cytochrome c oxidase subunit 2 family. Component of the cytochrome c oxidase (complex IV, CIV), a multisubunit enzyme composed of a catalytic core of 3 subunits and several supernumerary subunits. The complex exists as a monomer or a dimer and forms supercomplexes (SCs) in the inner mitochondrial membrane with ubiquinol-cytochrome c oxidoreductase (cytochrome b-c1 complex, complex III, CIII). Requires Cu cation as cofactor.

The protein localises to the mitochondrion inner membrane. It carries out the reaction 4 Fe(II)-[cytochrome c] + O2 + 8 H(+)(in) = 4 Fe(III)-[cytochrome c] + 2 H2O + 4 H(+)(out). In terms of biological role, component of the cytochrome c oxidase, the last enzyme in the mitochondrial electron transport chain which drives oxidative phosphorylation. The respiratory chain contains 3 multisubunit complexes succinate dehydrogenase (complex II, CII), ubiquinol-cytochrome c oxidoreductase (cytochrome b-c1 complex, complex III, CIII) and cytochrome c oxidase (complex IV, CIV), that cooperate to transfer electrons derived from NADH and succinate to molecular oxygen, creating an electrochemical gradient over the inner membrane that drives transmembrane transport and the ATP synthase. Cytochrome c oxidase is the component of the respiratory chain that catalyzes the reduction of oxygen to water. Electrons originating from reduced cytochrome c in the intermembrane space (IMS) are transferred via the dinuclear copper A center (CU(A)) of subunit 2 and heme A of subunit 1 to the active site in subunit 1, a binuclear center (BNC) formed by heme A3 and copper B (CU(B)). The BNC reduces molecular oxygen to 2 water molecules using 4 electrons from cytochrome c in the IMS and 4 protons from the mitochondrial matrix. In Podospora anserina (strain S / ATCC MYA-4624 / DSM 980 / FGSC 10383) (Pleurage anserina), this protein is Cytochrome c oxidase subunit 2 (COII).